Here is a 169-residue protein sequence, read N- to C-terminus: Nucleoside diphosphate kinase 3 (169 aa).

Residues Lys29, Arg105, Thr111, Arg122, Val129, and Asn132 each contribute to the ADP site. His135 acts as the Pros-phosphohistidine intermediate in catalysis.

Belongs to the NDK family. In terms of assembly, homohexamer. The cofactor is Mg(2+).

The protein localises to the mitochondrion outer membrane. It localises to the cytoplasm. Its subcellular location is the cytoskeleton. The protein resides in the cilium basal body. It catalyses the reaction a 2'-deoxyribonucleoside 5'-diphosphate + ATP = a 2'-deoxyribonucleoside 5'-triphosphate + ADP. The catalysed reaction is a ribonucleoside 5'-diphosphate + ATP = a ribonucleoside 5'-triphosphate + ADP. Functionally, catalyzes the phosphorylation of ribonucleosides and deoxyribonucleoside diphosphates, other than ATP, into the corresponding triphosphates with ATP as the major phosphate donor. The ATP gamma phosphate is transferred to the nucleoside diphosphate beta phosphate via a ping-pong mechanism, using a phosphorylated active-site intermediate. Through the catalyzed exchange of gamma-phosphate between di- and triphosphonucleosides participates in regulation of intracellular nucleotide homeostasis. Required for ciliary function during renal development. Independently of its kinase activity, facilitates mitochondrial tethering prior to membrane fusion through its direct membrane-binding and hexamerization. Implicated in repair of both single- and double-stranded breaks in DNA, independently of its kinase activity. The sequence is that of Nucleoside diphosphate kinase 3 from Danio rerio (Zebrafish).